The primary structure comprises 202 residues: FMN-dependent NADH:quinone oxidoreductase 1 (202 aa).

Residues S9, 15 to 17, 95 to 98, and 139 to 142 contribute to the FMN site; these read SAS, MYNF, and TSGG.

The protein belongs to the azoreductase type 1 family. Homodimer. The cofactor is FMN.

It catalyses the reaction 2 a quinone + NADH + H(+) = 2 a 1,4-benzosemiquinone + NAD(+). The catalysed reaction is N,N-dimethyl-1,4-phenylenediamine + anthranilate + 2 NAD(+) = 2-(4-dimethylaminophenyl)diazenylbenzoate + 2 NADH + 2 H(+). Quinone reductase that provides resistance to thiol-specific stress caused by electrophilic quinones. In terms of biological role, also exhibits azoreductase activity. Catalyzes the reductive cleavage of the azo bond in aromatic azo compounds to the corresponding amines. The polypeptide is FMN-dependent NADH:quinone oxidoreductase 1 (Pseudomonas syringae pv. tomato (strain ATCC BAA-871 / DC3000)).